Consider the following 294-residue polypeptide: N-acetylmuramic acid 6-phosphate etherase (294 aa).

Residues 56 to 219 enclose the SIS domain; that stretch reads TSYSLRNGGR…STLSMVSVGK (164 aa). The active-site Proton donor is Glu84. The active site involves Glu115.

The protein belongs to the GCKR-like family. MurNAc-6-P etherase subfamily. Homodimer.

It catalyses the reaction N-acetyl-D-muramate 6-phosphate + H2O = N-acetyl-D-glucosamine 6-phosphate + (R)-lactate. It participates in amino-sugar metabolism; 1,6-anhydro-N-acetylmuramate degradation. Its pathway is amino-sugar metabolism; N-acetylmuramate degradation. It functions in the pathway cell wall biogenesis; peptidoglycan recycling. Its function is as follows. Specifically catalyzes the cleavage of the D-lactyl ether substituent of MurNAc 6-phosphate, producing GlcNAc 6-phosphate and D-lactate. Together with AnmK, is also required for the utilization of anhydro-N-acetylmuramic acid (anhMurNAc) either imported from the medium or derived from its own cell wall murein, and thus plays a role in cell wall recycling. This Francisella tularensis subsp. holarctica (strain LVS) protein is N-acetylmuramic acid 6-phosphate etherase.